Here is a 315-residue protein sequence, read N- to C-terminus: tRNA dimethylallyltransferase (315 aa).

13–20 is an ATP binding site; that stretch reads GPTASGKT. 15–20 contacts substrate; that stretch reads TASGKT. Interaction with substrate tRNA stretches follow at residues 38 to 41, 162 to 166, 243 to 248, and 276 to 283; these read DSAL, QRLSR, RCVGYR, and KRQITWLR.

The protein belongs to the IPP transferase family. In terms of assembly, monomer. Requires Mg(2+) as cofactor.

The catalysed reaction is adenosine(37) in tRNA + dimethylallyl diphosphate = N(6)-dimethylallyladenosine(37) in tRNA + diphosphate. Its function is as follows. Catalyzes the transfer of a dimethylallyl group onto the adenine at position 37 in tRNAs that read codons beginning with uridine, leading to the formation of N6-(dimethylallyl)adenosine (i(6)A). In Vibrio vulnificus (strain YJ016), this protein is tRNA dimethylallyltransferase.